The following is a 496-amino-acid chain: Probable CtpA-like serine protease (496 aa).

Over residues 1-16 (MDDKQHTSSSDDERAE) the composition is skewed to basic and acidic residues. The interval 1-27 (MDDKQHTSSSDDERAEIATSNQDQETN) is disordered. Polar residues predominate over residues 18–27 (ATSNQDQETN). A helical membrane pass occupies residues 39–59 (FISILIGTILITAVITVVAYI). The PDZ domain maps to 124 to 206 (TKSFNEGVSG…TEVTLTVQRG (83 aa)). Residues S329, D340, and K354 each act as charge relay system in the active site.

It belongs to the peptidase S41A family.

It localises to the cell membrane. The sequence is that of Probable CtpA-like serine protease from Staphylococcus aureus (strain MSSA476).